The following is a 574-amino-acid chain: Man(5)GlcNAc(2)-PP-dolichol translocation protein RFT1 (574 aa).

At 1 to 24 the chain is on the lumenal side; that stretch reads MAKKNSQLPSTSEQILERSTTGAT. A helical transmembrane segment spans residues 25-45; sequence FLMMGQLFTKLVTFILNNLLI. The Cytoplasmic portion of the chain corresponds to 46-48; that stretch reads RFL. The chain crosses the membrane as a helical span at residues 49–69; sequence SPRIFGITAFLEFIQGTVLFF. The Lumenal segment spans residues 70–110; it reads SRDAIRLSTLRISDSGNGIIDDDDEEEYQETHYKSKVLQTA. The chain crosses the membrane as a helical span at residues 111–131; the sequence is VNFAYIPFWIGFPLSIGLIAW. Residues 132 to 148 are Cytoplasmic-facing; that stretch reads QYRNINAYFITLPFFRW. A helical transmembrane segment spans residues 149 to 169; it reads SIFLIWLSIIVELLSEPFFIV. Over 170-181 the chain is Lumenal; it reads NQFMLNYAARSR. A helical membrane pass occupies residues 182–202; sequence FESIAVTTGCIVNFIVVYAVQ. The Cytoplasmic portion of the chain corresponds to 203–218; that stretch reads QSRYPMGVVTSDIDKE. A helical membrane pass occupies residues 219–239; the sequence is GIAILAFALGKLAHSITLLAC. The Lumenal portion of the chain corresponds to 240–319; it reads YYWDYLKNFK…INSLCTVEEQ (80 aa). The chain crosses the membrane as a helical span at residues 320–340; it reads GIYALLSNYGSLLTRLLFAPI. Residues 341–372 lie on the Cytoplasmic side of the membrane; it reads EESLRLFLARLLSSHNPKNLKLSIEVLVNLTR. A helical membrane pass occupies residues 373-393; the sequence is FYIYLSLMIIVFGPANSSFLL. Over 394–413 the chain is Lumenal; that stretch reads QFLIGSKWSTTSVLDTIRVY. The chain crosses the membrane as a helical span at residues 414–434; it reads CFYIPFLSLNGIFEAFFQSVA. The Cytoplasmic portion of the chain corresponds to 435–443; the sequence is TGDQILKHS. The helical transmembrane segment at 444-464 threads the bilayer; sequence YFMMAFSGIFLLNSWLLIEKL. Over 465–469 the chain is Lumenal; sequence KLSIE. A helical membrane pass occupies residues 470 to 490; the sequence is GLILSNIINMVLRILYCGVFL. Over 491-509 the chain is Cytoplasmic; sequence NKFHRELFTDSSFFFNFKD. The chain crosses the membrane as a helical span at residues 510–530; sequence FKTVIIAGSTICLLDWWFIGY. Residues 531–532 are Lumenal-facing; that stretch reads VK. A helical membrane pass occupies residues 533–553; it reads NLQQFVVNVLFAMGLLALILV. Residues 554 to 574 are Cytoplasmic-facing; the sequence is KERQTIQSFINKRAVSNSKDV.

It belongs to the RFT1 family.

The protein resides in the endoplasmic reticulum membrane. It functions in the pathway protein modification; protein glycosylation. Intramembrane glycolipid transporter that operates in the biosynthetic pathway of dolichol-linked oligosaccharides, the glycan precursors employed in protein asparagine (N)-glycosylation. The sequential addition of sugars to dolichol pyrophosphate produces dolichol-linked oligosaccharides containing fourteen sugars, including two GlcNAcs, nine mannoses and three glucoses. Once assembled, the oligosaccharide is transferred from the lipid to nascent proteins by oligosaccharyltransferases. The assembly of dolichol-linked oligosaccharides begins on the cytosolic side of the endoplasmic reticulum membrane and finishes in its lumen. RFT1 could mediate the translocation of the cytosolically oriented intermediate DolPP-GlcNAc2Man5, produced by ALG11, into the ER lumen where dolichol-linked oligosaccharides assembly continues. However, the intramembrane lipid transporter activity could not be confirmed in vitro. This chain is Man(5)GlcNAc(2)-PP-dolichol translocation protein RFT1, found in Saccharomyces cerevisiae (strain ATCC 204508 / S288c) (Baker's yeast).